Here is a 167-residue protein sequence, read N- to C-terminus: Shikimate kinase (167 aa).

12 to 17 is an ATP binding site; the sequence is GSGKTT. Thr-16 is a binding site for Mg(2+). The substrate site is built by Asp-34, Arg-58, and Gly-80. Arg-117 lines the ATP pocket. Residue Arg-135 coordinates substrate. Position 152 (Arg-152) interacts with ATP.

This sequence belongs to the shikimate kinase family. As to quaternary structure, monomer. Mg(2+) is required as a cofactor.

The protein localises to the cytoplasm. It carries out the reaction shikimate + ATP = 3-phosphoshikimate + ADP + H(+). It functions in the pathway metabolic intermediate biosynthesis; chorismate biosynthesis; chorismate from D-erythrose 4-phosphate and phosphoenolpyruvate: step 5/7. Functionally, catalyzes the specific phosphorylation of the 3-hydroxyl group of shikimic acid using ATP as a cosubstrate. This chain is Shikimate kinase, found in Salinispora tropica (strain ATCC BAA-916 / DSM 44818 / JCM 13857 / NBRC 105044 / CNB-440).